The sequence spans 158 residues: Endoribonuclease YbeY (158 aa).

Zn(2+)-binding residues include histidine 121, histidine 125, and histidine 131.

Belongs to the endoribonuclease YbeY family. Zn(2+) is required as a cofactor.

It localises to the cytoplasm. Single strand-specific metallo-endoribonuclease involved in late-stage 70S ribosome quality control and in maturation of the 3' terminus of the 16S rRNA. The chain is Endoribonuclease YbeY from Exiguobacterium sp. (strain ATCC BAA-1283 / AT1b).